A 779-amino-acid chain; its full sequence is Transcription activator of gluconeogenesis BDCG_02812 (779 aa).

The disordered stretch occupies residues 1-70; the sequence is MTASTRNGSP…NAKDPLRPRR (70 aa). Polar residues predominate over residues 25–61; the sequence is KSMTTTPANPPETKSQTNGKGSGTAQSSQKPASTSAN. Residues 77–105 constitute a DNA-binding region (zn(2)-C6 fungal-type); that stretch reads CFACQRAHLTCGDERPCQRCIKRGLQDAC. Disordered regions lie at residues 135 to 163, 202 to 239, 285 to 344, 401 to 421, 559 to 590, and 655 to 732; these read QANTTRNIPNQRGNASNSNSNKVSRQSVS, SVFHAQSPSSTQNFDLSSNPQTQNLSSAMSQTASSVSG, GAGD…ANPR, TNLMHPTNTPQQSRISTPGLK, GSSLSSASSVRGSSTFTPRNNNTHNSIDPHTG, and FHGK…QTWG. The span at 202–226 shows a compositional bias: polar residues; that stretch reads SVFHAQSPSSTQNFDLSSNPQTQNL. Positions 227–238 are enriched in low complexity; sequence SSAMSQTASSVS. Polar residues-rich tracts occupy residues 291-322, 333-344, and 401-416; these read PSDSATQRGSIGRSSGTFTAQNFGDSANNQSP, WNPTGQGQANPR, and TNLMHPTNTPQQSRIS. A compositionally biased stretch (low complexity) spans 560 to 572; the sequence is SSLSSASSVRGSS. Residues 573–586 show a composition bias toward polar residues; sequence TFTPRNNNTHNSID. The segment covering 672-719 has biased composition (low complexity); sequence TGTTTSGDVATTTATGTSTSNGANANTNGNNTNPNDPSSAASSSASSA. Polar residues predominate over residues 720–729; the sequence is LQGPQQSPRQ.

The protein belongs to the ERT1/acuK family.

Its subcellular location is the nucleus. Transcription factor which regulates nonfermentable carbon utilization. Activator of gluconeogenetic genes. The protein is Transcription activator of gluconeogenesis BDCG_02812 of Ajellomyces dermatitidis (strain ER-3 / ATCC MYA-2586) (Blastomyces dermatitidis).